Here is a 421-residue protein sequence, read N- to C-terminus: Adenylosuccinate synthetase (421 aa).

Residues 11 to 17 (GDEGKGK) and 39 to 41 (GHT) each bind GTP. The Proton acceptor role is filled by aspartate 12. Aspartate 12 and glycine 39 together coordinate Mg(2+). IMP-binding positions include 12 to 15 (DEGK), 37 to 40 (NAGH), threonine 124, arginine 138, glutamine 220, threonine 235, and arginine 299. The active-site Proton donor is histidine 40. 295–301 (TTTGRPR) provides a ligand contact to substrate. GTP-binding positions include arginine 301, 327–329 (KLD), and 409–411 (SVG).

It belongs to the adenylosuccinate synthetase family. Homodimer. The cofactor is Mg(2+).

The protein resides in the cytoplasm. It catalyses the reaction IMP + L-aspartate + GTP = N(6)-(1,2-dicarboxyethyl)-AMP + GDP + phosphate + 2 H(+). The protein operates within purine metabolism; AMP biosynthesis via de novo pathway; AMP from IMP: step 1/2. Plays an important role in the de novo pathway of purine nucleotide biosynthesis. Catalyzes the first committed step in the biosynthesis of AMP from IMP. In Methanothrix thermoacetophila (strain DSM 6194 / JCM 14653 / NBRC 101360 / PT) (Methanosaeta thermophila), this protein is Adenylosuccinate synthetase.